A 249-amino-acid polypeptide reads, in one-letter code: Ubiquinone biosynthesis O-methyltransferase (249 aa).

S-adenosyl-L-methionine-binding residues include arginine 44, glycine 75, aspartate 96, and methionine 138.

This sequence belongs to the methyltransferase superfamily. UbiG/COQ3 family.

It catalyses the reaction a 3-demethylubiquinol + S-adenosyl-L-methionine = a ubiquinol + S-adenosyl-L-homocysteine + H(+). The enzyme catalyses a 3-(all-trans-polyprenyl)benzene-1,2-diol + S-adenosyl-L-methionine = a 2-methoxy-6-(all-trans-polyprenyl)phenol + S-adenosyl-L-homocysteine + H(+). It participates in cofactor biosynthesis; ubiquinone biosynthesis. Functionally, O-methyltransferase that catalyzes the 2 O-methylation steps in the ubiquinone biosynthetic pathway. This chain is Ubiquinone biosynthesis O-methyltransferase, found in Paramagnetospirillum magneticum (strain ATCC 700264 / AMB-1) (Magnetospirillum magneticum).